Consider the following 369-residue polypeptide: Chaperone protein DnaJ (369 aa).

The 66-residue stretch at 4–69 (SYYEILEVEK…KKRALYDRYG (66 aa)) folds into the J domain. The segment at 130 to 207 (GCKKTIKAQY…CKGKTYILKD (78 aa)) adopts a CR-type zinc-finger fold. Positions 143, 146, 159, 162, 181, 184, 195, and 198 each coordinate Zn(2+). 4 CXXCXGXG motif repeats span residues 143–150 (CESCDGTG), 159–166 (CKQCNGQG), 181–188 (CGACQGKG), and 195–202 (CQACKGKT).

Belongs to the DnaJ family. Homodimer. Zn(2+) serves as cofactor.

The protein localises to the cytoplasm. Functionally, participates actively in the response to hyperosmotic and heat shock by preventing the aggregation of stress-denatured proteins and by disaggregating proteins, also in an autonomous, DnaK-independent fashion. Unfolded proteins bind initially to DnaJ; upon interaction with the DnaJ-bound protein, DnaK hydrolyzes its bound ATP, resulting in the formation of a stable complex. GrpE releases ADP from DnaK; ATP binding to DnaK triggers the release of the substrate protein, thus completing the reaction cycle. Several rounds of ATP-dependent interactions between DnaJ, DnaK and GrpE are required for fully efficient folding. Also involved, together with DnaK and GrpE, in the DNA replication of plasmids through activation of initiation proteins. In Helicobacter pylori (strain J99 / ATCC 700824) (Campylobacter pylori J99), this protein is Chaperone protein DnaJ.